Here is a 142-residue protein sequence, read N- to C-terminus: MAKKIQSYIKLQVAAGMANPSPPIGPALGQKGVNIMEFCKLFNKTTENVEKGLPIPVIVTVYSDRSFTFITKTPPASVLLKKAAGIKSGSSKPKIETTGKITKLQIEEIAKTKKNDMTGLNIESMMRSIEGTAKSMGLIVED.

The protein belongs to the universal ribosomal protein uL11 family. In terms of assembly, part of the ribosomal stalk of the 50S ribosomal subunit. Interacts with L10 and the large rRNA to form the base of the stalk. L10 forms an elongated spine to which L12 dimers bind in a sequential fashion forming a multimeric L10(L12)X complex. In terms of processing, one or more lysine residues are methylated.

Functionally, forms part of the ribosomal stalk which helps the ribosome interact with GTP-bound translation factors. The polypeptide is Large ribosomal subunit protein uL11 (Buchnera aphidicola subsp. Schizaphis graminum (strain Sg)).